Reading from the N-terminus, the 128-residue chain is Large ribosomal subunit protein bL20c (128 aa).

It belongs to the bacterial ribosomal protein bL20 family.

Its subcellular location is the plastid. In terms of biological role, binds directly to 23S ribosomal RNA and is necessary for the in vitro assembly process of the 50S ribosomal subunit. It is not involved in the protein synthesizing functions of that subunit. This chain is Large ribosomal subunit protein bL20c (rpl20), found in Lathraea clandestina (Purple toothwort).